An 843-amino-acid polypeptide reads, in one-letter code: Structure-specific endonuclease subunit SLX4 (843 aa).

Disordered stretches follow at residues 26–111 (SPPS…KTTT), 281–313 (AIPT…QKGK), 339–377 (NVAP…NGPP), 603–655 (SKTF…AKAL), and 729–748 (ATPN…FSIE). Composition is skewed to polar residues over residues 50 to 69 (ASFS…NGEN) and 285 to 301 (PTES…SSKQ). Over residues 302–311 (QRVKAKKPQK) the composition is skewed to basic residues. Polar residues-rich tracts occupy residues 349 to 372 (NISN…TLKN) and 603 to 616 (SKTF…NQGT). The span at 617-636 (DDARKNGFRKENHSDVRVRP) shows a compositional bias: basic and acidic residues. The span at 739–748 (RSSSTSFSIE) shows a compositional bias: low complexity.

This sequence belongs to the SLX4 family. In terms of assembly, forms a heterodimer with SLX1. Post-translationally, phosphorylated in response to DNA damage.

It is found in the nucleus. Functionally, regulatory subunit of the SLX1-SLX4 structure-specific endonuclease that resolves DNA secondary structures generated during DNA repair and recombination. Has endonuclease activity towards branched DNA substrates, introducing single-strand cuts in duplex DNA close to junctions with ss-DNA. The protein is Structure-specific endonuclease subunit SLX4 of Ajellomyces capsulatus (strain G186AR / H82 / ATCC MYA-2454 / RMSCC 2432) (Darling's disease fungus).